We begin with the raw amino-acid sequence, 181 residues long: UPF0301 protein MXAN_2022 (181 aa).

It belongs to the UPF0301 (AlgH) family.

This Myxococcus xanthus (strain DK1622) protein is UPF0301 protein MXAN_2022.